The chain runs to 405 residues: Dynactin subunit 2 (405 aa).

Positions 1 to 24 (MADPKYADLPGIARNEPDVYETSD) are disordered. The stretch at 101–134 (PQQKYQRLLHEIQELTQEVEKAQSTVKESAAEEK) forms a coiled coil. The interval 186 to 207 (AKTRKNPEGKSPAKGPGPDNEN) is disordered. Residues 383–403 (KENLATVEDNFTSIDARIKKL) adopt a coiled-coil conformation.

It belongs to the dynactin subunit 2 family. In terms of assembly, subunit of dynactin, a multiprotein complex part of a tripartite complex with dynein and a adapter, such as BICDL1, BICD2 or HOOK3. The dynactin complex is built around ACTR1A/ACTB filament and consists of an actin-related filament composed of a shoulder domain, a pointed end and a barbed end. Its length is defined by its flexible shoulder domain. The soulder is composed of 2 DCTN1 subunits, 4 DCTN2 and 2 DCTN3.

The protein resides in the cytoplasm. Its subcellular location is the cytoskeleton. It localises to the microtubule organizing center. The protein localises to the centrosome. It is found in the membrane. Functionally, part of the dynactin complex that activates the molecular motor dynein for ultra-processive transport along microtubules. In the dynactin soulder domain, binds the ACTR1A filament and acts as a molecular ruler to determine the length. Modulates cytoplasmic dynein binding to an organelle, and plays a role in prometaphase chromosome alignment and spindle organization during mitosis. Involved in anchoring microtubules to centrosomes. The chain is Dynactin subunit 2 (dctn2) from Xenopus tropicalis (Western clawed frog).